The sequence spans 450 residues: Tryptophan dimethylallyltransferase 2 (450 aa).

L-tryptophan is bound by residues 80-81 (IL) and Glu89. Positions 100, 186, and 188 each coordinate substrate. L-tryptophan is bound by residues Tyr190 and Arg251. Positions 264, 266, 268, 350, 352, 416, and 420 each coordinate substrate.

It belongs to the tryptophan dimethylallyltransferase family. As to quaternary structure, homodimer.

It catalyses the reaction L-tryptophan + dimethylallyl diphosphate = 4-(3-methylbut-2-enyl)-L-tryptophan + diphosphate. It functions in the pathway alkaloid biosynthesis; ergot alkaloid biosynthesis. In terms of biological role, catalyzes the first step of ergot alkaloid biosynthesis. Ergot alkaloids, which are produced by endophyte fungi, can enhance plant host fitness, but also cause livestock toxicosis to host plants. The chain is Tryptophan dimethylallyltransferase 2 (dmaW2) from Epichloe coenophiala (Tall fescue endophyte fungus).